Reading from the N-terminus, the 797-residue chain is MTRSASATAGLTDAEVAQRVAEGKSNDIPERVTRTVGQIVRANVFTRINAILGVLLLIVLATGSLINGMFGLLIIANSVIGMVQEIRAKQTLDKLAIIGQAKPLVRRQSGTRTRSTNEVVLDDIIELGPGDQVVVDGEVVEEENLEIDESLLTGEADPIAKDAGDTVMSGSFVVSGAGAYRATKVGSEAYAAKLAAEASKFTLVKSELRNGINRILQFITYLLVPAGLLTIYTQLFTTHVGWRESVLRMVGALVPMVPEGLVLMTSIAFAVGVVRLGQRQCLVQELPAIEGLARVDVVCADKTGTLTESGMRVCEVEELDGAGRQESVADVLAALAAADARPNASMQAIAEAFHSPPGWVVAANAPFKSATKWSGVSFRDHGNWVIGAPDVLLDPASVAARQAERIGAQGLRVLLLAAGSVAVDHAQAPGQVTPVALVVLEQKVRPDARETLDYFAVQNVSVKVISGDNAVSVGAVADRLGLHGEAMDARALPTGREELADTLDSYTSFGRVRPDQKRAIVHALQSHGHTVAMTGDGVNDVLALKDADIGVAMGSGSPASRAVAQIVLLNNRFATLPHVVGEGRRVIGNIERVANLFLTKTVYSVLLALLVGIECLIAIPLRRDPLLFPFQPIHVTIAAWFTIGIPAFILSLAPNNERAYPGFVRRVMTSAVPFGLVIGVATFVTYLAAYQGRYASWQEQEQASTAALITLLMTALWVLAVIARPYQWWRLALVLASGLAYVVIFSLPLAREKFLLDASNLATTSIALAVGVVGAATIEAMWWIRSRMLGVKPRVWR.

Transmembrane regions (helical) follow at residues 55–75 (LLLI…LLII), 215–235 (ILQF…YTQL), and 254–274 (VPMV…VGVV). D301 functions as the 4-aspartylphosphate intermediate in the catalytic mechanism. Mg(2+) contacts are provided by D301, T303, and D536. 6 consecutive transmembrane segments (helical) span residues 601-621 (TVYS…AIPL), 633-653 (IHVT…LSLA), 667-687 (VMTS…VTYL), 703-723 (ASTA…AVIA), 729-749 (WRLA…SLPL), and 764-784 (TSIA…MWWI).

The protein belongs to the cation transport ATPase (P-type) (TC 3.A.3) family.

It is found in the cell membrane. It catalyses the reaction Ca(2+)(in) + ATP + H2O = Ca(2+)(out) + ADP + phosphate + H(+). P-type ATPase involved in specific uptake of calcium. This Mycobacterium bovis (strain ATCC BAA-935 / AF2122/97) protein is Calcium-transporting ATPase CtpE (ctpE).